The following is a 131-amino-acid chain: Large ribosomal subunit protein bL12 (131 aa).

This sequence belongs to the bacterial ribosomal protein bL12 family. In terms of assembly, homodimer. Part of the ribosomal stalk of the 50S ribosomal subunit. Forms a multimeric L10(L12)X complex, where L10 forms an elongated spine to which 2 to 4 L12 dimers bind in a sequential fashion. Binds GTP-bound translation factors.

Its function is as follows. Forms part of the ribosomal stalk which helps the ribosome interact with GTP-bound translation factors. Is thus essential for accurate translation. The polypeptide is Large ribosomal subunit protein bL12 (Prochlorococcus marinus (strain MIT 9215)).